A 45-amino-acid polypeptide reads, in one-letter code: Photosystem II reaction center protein K (45 aa).

Residues 1–8 (MTQIFLIG) constitute a propeptide that is removed on maturation. Residues 20-40 (IVDVLPIIPVLFLLLAFVWQA) traverse the membrane as a helical segment.

This sequence belongs to the PsbK family. In terms of assembly, PSII is composed of 1 copy each of membrane proteins PsbA, PsbB, PsbC, PsbD, PsbE, PsbF, PsbH, PsbI, PsbJ, PsbK, PsbL, PsbM, PsbT, PsbX, PsbY, PsbZ, Psb30/Ycf12, at least 3 peripheral proteins of the oxygen-evolving complex and a large number of cofactors. It forms dimeric complexes.

The protein resides in the plastid. It localises to the chloroplast thylakoid membrane. In terms of biological role, one of the components of the core complex of photosystem II (PSII). PSII is a light-driven water:plastoquinone oxidoreductase that uses light energy to abstract electrons from H(2)O, generating O(2) and a proton gradient subsequently used for ATP formation. It consists of a core antenna complex that captures photons, and an electron transfer chain that converts photonic excitation into a charge separation. The sequence is that of Photosystem II reaction center protein K from Ostreococcus tauri.